Consider the following 449-residue polypeptide: GTPase Der (449 aa).

EngA-type G domains are found at residues 3–167 (AVIA…PTSE) and 178–351 (PRIA…IDSR). GTP-binding positions include 9 to 16 (GRPNVGKS), 56 to 60 (DTGGF), 119 to 122 (NKMD), 184 to 191 (GRPNVGKS), 231 to 235 (DTAGM), and 296 to 299 (NKWD). A KH-like domain is found at 352–436 (RHFSTAELNR…PLRLVFRQGE (85 aa)).

The protein belongs to the TRAFAC class TrmE-Era-EngA-EngB-Septin-like GTPase superfamily. EngA (Der) GTPase family. As to quaternary structure, associates with the 50S ribosomal subunit.

Its function is as follows. GTPase that plays an essential role in the late steps of ribosome biogenesis. In Acidithiobacillus ferrooxidans (strain ATCC 23270 / DSM 14882 / CIP 104768 / NCIMB 8455) (Ferrobacillus ferrooxidans (strain ATCC 23270)), this protein is GTPase Der.